A 434-amino-acid chain; its full sequence is Neuropeptide receptor 22 (434 aa).

Residues 1–55 (MDEGGGIGSSLLSRITTTASEIMMRNEPTTTENPAVQEMNHIYHLTPSMKMLCIL) lie on the Extracellular side of the membrane. A helical transmembrane segment spans residues 56 to 76 (FYSILCVCCVYGNVLVILVIV). Residues 77 to 86 (YFKRLRTATN) are Cytoplasmic-facing. Residues 87-107 (ILILNLAVADLLISVFCIPFS) form a helical membrane-spanning segment. Residues 108 to 128 (YWQVLIYDDQRWLFGSMMCSL) lie on the Extracellular side of the membrane. Residues cysteine 126 and cysteine 204 are joined by a disulfide bond. Residues 129–149 (LAFLQAMAVFLSAWTLVVISF) form a helical membrane-spanning segment. At 150–169 (DRWMAIMFLLTPNIRITRRR) the chain is on the cytoplasmic side. A helical membrane pass occupies residues 170–190 (ALYLVAATWIFSILMALPLLF). At 191-226 (TTRFFEDQDGLPNCGENWTYFGDSGEQVRKVYSSMV) the chain is on the extracellular side. Asparagine 207 carries an N-linked (GlcNAc...) asparagine glycan. A helical membrane pass occupies residues 227–247 (LILQYVVPQAVLIITYTHIGI). At 248 to 277 (KMWNSRVPGMQNGATKKMIVDRHESVKKLV) the chain is on the cytoplasmic side. The chain crosses the membrane as a helical span at residues 278–298 (PMVILISALFALCWLPLLILI). Topologically, residues 299–310 (NVIPEFYPDINS) are extracellular. The helical transmembrane segment at 311–331 (WGYILYLWWFAHGLAMSHSMV) threads the bilayer. Residues 332–434 (NPIIYFIRNA…VRNNSANSLA (103 aa)) are Cytoplasmic-facing.

The protein belongs to the G-protein coupled receptor 1 family. As to expression, expressed in many cells, mainly in the head region, with expression detected in the head muscles, I2 neurons, MC neurons, RIH neuron, AIA neurons, AUA neurons, ASK neurons, ASI neurons, a few B-type motorneurons in the posterior ventral nerve cord, pharyngeal muscles, body wall muscles, the intestine and a few classes of unidentified cells anterior to the nerve ring. Expression in the MC neurons is important to mediate suppression of feeding while expression in the RIH neuron is important for the facilitation of egg-laying. No expression detected in other tissues including hypodermis.

The protein localises to the cell membrane. Functionally, receptor for the LURY-1-1 and LURY-1-2 peptides which control food-related processes including feeding, lifespan, egg-laying and roaming behavior. Receptor for flp-7 which stimulates serotonin-induced fat loss. Serotonin induces secretion of flp-7 from neurons and binding to npr-22 which leads to induction of the atgp-1 lipase and subsequent fat loss. Acts in vitro as a receptor for the flp-7 FMRFamide-like neuropeptides TPMQRSSMVRF-amide, SPMQRSSMVRF-amide, SPMERSAMVRF-amide and SPMDRSKMVRF-amide. Also acts in vitro as a receptor for a number of other FMRFamide-like neuropeptides including the flp-1 neuropeptide PNFMRY-amide, the flp-9 neuropeptide KPSFVRF-amide, the flp-11 neuropeptides AMRNALVRF-amide, ASGGMRNALVRF-amide and NGAPQPFVRF-amide, the flp-13 neuropeptides AADGAPLIRF-amide, ASPSAPLIRF-amide, SPSAVPLIRF-amide, SAAAPLIRF-amide and ASSAPLIRF-amide, and the flp-22 neuropeptide SPSAKWMRF-amide. The SPMERSAMVRF-amide neuropeptide from flp-7 acts as the strongest in vitro activator of npr-22. In Caenorhabditis elegans, this protein is Neuropeptide receptor 22.